Reading from the N-terminus, the 323-residue chain is MKLAFLIDPIAALDPTHDSTVALMEAAQLRGHEIWIGEISDLSVHVGEPLGLLRPLKIEPVQWLGDRWQVANPWFTAGEAKRRSLHDFAAVFMRKDPPVTTAYLYATYLLDLVDPKKTRVVNSPEGLRHANEKMYALQFQSVVPRTLVSSNKAEIRAFLDELRAAVLKPLGGKAGEGILFLDPGDRNFNSLVEISTQQGQLPVMVQQYLPEAKDGDKRIILVNGEPLGAVNRVPTGREFRGNMAVGGRVEAVPITDRDREICAAVAPRLRQDGLFFVGIDVIGGYLTEVNVTSPTGIREIDRLNGVSIGDQTIAALEALVNQG.

The ATP-grasp domain maps to 133 to 317 (KMYALQFQSV…IGDQTIAALE (185 aa)). 159-215 (LDELRAAVLKPLGGKAGEGILFLDPGDRNFNSLVEISTQQGQLPVMVQQYLPEAKDG) provides a ligand contact to ATP. Residues Glu-288 and Asn-290 each coordinate Mg(2+).

It belongs to the prokaryotic GSH synthase family. The cofactor is Mg(2+). It depends on Mn(2+) as a cofactor.

The catalysed reaction is gamma-L-glutamyl-L-cysteine + glycine + ATP = glutathione + ADP + phosphate + H(+). It participates in sulfur metabolism; glutathione biosynthesis; glutathione from L-cysteine and L-glutamate: step 2/2. The sequence is that of Glutathione synthetase from Synechococcus elongatus (strain ATCC 33912 / PCC 7942 / FACHB-805) (Anacystis nidulans R2).